A 161-amino-acid polypeptide reads, in one-letter code: Peripheral myelin protein 22 (161 aa).

Residue M1 is a topological domain, cytoplasmic. A helical membrane pass occupies residues 2-31; sequence LLLLLGILFLHIAVLVLLFVSTIVSQWLVG. Residues 32–64 are Extracellular-facing; the sequence is NGHTTDLWQNCTTSALGAVQHCYSSSVSEWLQS. An N-linked (GlcNAc...) asparagine glycan is attached at N41. A helical transmembrane segment spans residues 65-91; that stretch reads VQATMILSVIFSVLALFLFFCQLFTLT. At 92–95 the chain is on the cytoplasmic side; that stretch reads KGGR. A helical transmembrane segment spans residues 96 to 119; sequence FYITGFFQILAGLCVMSAAAIYTV. Topologically, residues 120-133 are extracellular; the sequence is RHSEWHVNTDYSYG. The chain crosses the membrane as a helical span at residues 134-156; it reads FAYILAWVAFPLALLSGIIYVIL. The Cytoplasmic portion of the chain corresponds to 157 to 160; sequence RKRE.

It belongs to the PMP-22/EMP/MP20 family. Post-translationally, ubiquitinated by the DCX(DCAF13) E3 ubiquitin ligase complex, leading to its degradation. As to expression, schwann cells of the peripheral nervous system. Expressed at growth arrest of mammalian fibroblasts.

It localises to the cell membrane. Its function is as follows. Might be involved in growth regulation, and in myelinization in the peripheral nervous system. The polypeptide is Peripheral myelin protein 22 (Pmp22) (Mus musculus (Mouse)).